A 677-amino-acid chain; its full sequence is Probable serine/threonine-protein kinase mkcF (677 aa).

In terms of domain architecture, SH3 spans 1–58 (MLYLVATGDYKGPSENHLSFTKGQRIEFLERTENGFIKGKLDGKVGIFPSSLITIETR). A disordered region spans residues 72–244 (TETKDDTGSI…SSSSSSTKRR (173 aa)). The span at 79–94 (GSISSSTSTSTSSLTT) shows a compositional bias: low complexity. Positions 105 to 126 (GEQQPSTSTINGQSSSTSPILQ) are enriched in polar residues. The span at 127-146 (SNGTTNTTTSSTSNNNIGDN) shows a compositional bias: low complexity. Polar residues predominate over residues 158 to 174 (TTSNHSKSASRLSVASF). Residues 175–192 (STTTTATTTTTTTTTATS) are compositionally biased toward low complexity. The span at 209–224 (DKKSKDDDKSEKEGLY) shows a compositional bias: basic and acidic residues. Residues 230-240 (SSSSSSSSSSS) show a composition bias toward low complexity. Residues 401–646 (IKFTHMVGRG…VDKLMRHPFF (246 aa)) form the Protein kinase domain. Residues 407–415 (VGRGQYGKV) and lysine 428 contribute to the ATP site. The active-site Proton acceptor is aspartate 519.

The protein belongs to the protein kinase superfamily. Ser/Thr protein kinase family. STE20 subfamily. Requires Mg(2+) as cofactor.

It catalyses the reaction L-seryl-[protein] + ATP = O-phospho-L-seryl-[protein] + ADP + H(+). The enzyme catalyses L-threonyl-[protein] + ATP = O-phospho-L-threonyl-[protein] + ADP + H(+). This is Probable serine/threonine-protein kinase mkcF from Dictyostelium discoideum (Social amoeba).